Consider the following 1400-residue polypeptide: ABC transporter G family member 30 (1400 aa).

Asn116 carries an N-linked (GlcNAc...) asparagine glycan. Residues 141–414 enclose the ABC transporter 1 domain; the sequence is LLSEFICSKK…FEEFGFKCPE (274 aa). 174 to 181 serves as a coordination point for ATP; sequence GPPGCGKT. N-linked (GlcNAc...) asparagine glycosylation occurs at Asn472. The ABC transmembrane type-2 1 domain maps to 492-704; it reads EMLKACSRRE…AEIGLTANEF (213 aa). The next 7 membrane-spanning stretches (helical) occupy residues 510 to 530, 553 to 573, 582 to 602, 628 to 648, 652 to 672, 679 to 699, and 738 to 758; these read FIYL…MTVF, LFRL…RLGV, FYPA…LSVL, FLIL…IAAI, IIAS…FGGF, MPAW…EIGL, and TAFG…VLAL. The region spanning 808–1053 is the ABC transporter 2 domain; that stretch reads VTFQNVQYYI…VIEYFESFSG (246 aa). 845–852 serves as a coordination point for ATP; the sequence is GVSGAGKT. Residues Asn899 and Asn1040 are each glycosylated (N-linked (GlcNAc...) asparagine). In terms of domain architecture, ABC transmembrane type-2 2 spans 1125–1339; it reads VQLKACLWKQ…VLEGLLSSQY (215 aa). Helical transmembrane passes span 1144 to 1164, 1179 to 1199, 1228 to 1248, 1263 to 1283, 1289 to 1309, 1317 to 1337, and 1372 to 1392; these read HNIT…LLFW, IFGS…AAVI, VLIE…IVYP, LYSI…MVAL, MAVT…GFVI, WWIW…LLSS, and VVAF…AFFM.

This sequence belongs to the ABC transporter superfamily. ABCG family. PDR (TC 3.A.1.205) subfamily. As to expression, confined to roots. In seeds, mainly expressed in the embryo and, to a lesser extent, in the endosperm.

The protein resides in the cell membrane. The catalysed reaction is abscisate(out) + ATP + H2O = abscisate(in) + ADP + phosphate + H(+). Functionally, together with ABCG40, import into the embryo the abscisic acid (ABA) delivered from the endosperm via ABCG25 and ABCG31-mediated export to suppress radicle extension and subsequent embryonic growth. Involved in root secretion of phytochemicals (phenolics and sugars) which regulate soil microbiota, influencing both fungal and bacterial communities. May be a general defense protein. This is ABC transporter G family member 30 from Arabidopsis thaliana (Mouse-ear cress).